A 125-amino-acid polypeptide reads, in one-letter code: Small ribosomal subunit protein uS12 (125 aa).

A 3-methylthioaspartic acid modification is found at aspartate 89.

This sequence belongs to the universal ribosomal protein uS12 family. As to quaternary structure, part of the 30S ribosomal subunit. Contacts proteins S8 and S17. May interact with IF1 in the 30S initiation complex.

Functionally, with S4 and S5 plays an important role in translational accuracy. Interacts with and stabilizes bases of the 16S rRNA that are involved in tRNA selection in the A site and with the mRNA backbone. Located at the interface of the 30S and 50S subunits, it traverses the body of the 30S subunit contacting proteins on the other side and probably holding the rRNA structure together. The combined cluster of proteins S8, S12 and S17 appears to hold together the shoulder and platform of the 30S subunit. This is Small ribosomal subunit protein uS12 from Clostridium botulinum (strain ATCC 19397 / Type A).